We begin with the raw amino-acid sequence, 67 residues long: Large ribosomal subunit protein bL35 (67 aa).

This sequence belongs to the bacterial ribosomal protein bL35 family.

This chain is Large ribosomal subunit protein bL35, found in Leptospira interrogans serogroup Icterohaemorrhagiae serovar Lai (strain 56601).